Reading from the N-terminus, the 473-residue chain is MSEGTLYDKVWEEHTVSELPTGQTQLFCGLHLIHEVTSPQAFGMLQERDLEVAYPNRTHATVDHIVPTSDQSRPFRDDAAEEMMAELEQNVREAGINFSDPTSGEQGIVHVIGPEKGLTQPGMTIVCGDSHTSTHGAFGALAFGIGTSQIRDVLATQTVAMEKKKVRKIEVTGELGPGVEAKDVILEIIRRLGTEGGVGYVYEYAGEAIEDLDMEGRMSICNMSIEGGARAGYVNPDETTYEWLKETEYFQENPERFDELKPYWESIRSDEDAEYDDVVTIDGSELEPVVTWGTTPGQGVGITQPIPAPEDLPEEKQETARMAQEHMGVTPGETMEGYEIDVAFLGSCTNARLPDLRRAAGVVKGRQVADSVRAMVVPGSQRVKAAAEAEGLDEVFKEAGFEWREAGCSMCLGMNEDQLEGDEASASSSNRNFIGRQGSKDGRTVLMNPRMVAAAAVTGEVTDVRELKEVTTV.

The [4Fe-4S] cluster site is built by Cys-348, Cys-408, and Cys-411. The disordered stretch occupies residues 421–440 (GDEASASSSNRNFIGRQGSK).

This sequence belongs to the aconitase/IPM isomerase family. LeuC type 1 subfamily. As to quaternary structure, heterodimer of LeuC and LeuD. The cofactor is [4Fe-4S] cluster.

The enzyme catalyses (2R,3S)-3-isopropylmalate = (2S)-2-isopropylmalate. Its pathway is amino-acid biosynthesis; L-leucine biosynthesis; L-leucine from 3-methyl-2-oxobutanoate: step 2/4. Its function is as follows. Catalyzes the isomerization between 2-isopropylmalate and 3-isopropylmalate, via the formation of 2-isopropylmaleate. This Haloferax volcanii (strain ATCC 29605 / DSM 3757 / JCM 8879 / NBRC 14742 / NCIMB 2012 / VKM B-1768 / DS2) (Halobacterium volcanii) protein is 3-isopropylmalate dehydratase large subunit.